The following is a 34-amino-acid chain: uncharacterized protein (34 aa).

Residues 1–34 (MRLRRLFKQPSTRVLGVTNCPRQQGHQKRREQPD) form a disordered region. The segment covering 25-34 (GHQKRREQPD) has biased composition (basic residues).

This is an uncharacterized protein from Schizosaccharomyces pombe (strain 972 / ATCC 24843) (Fission yeast).